The sequence spans 1424 residues: Putative disease resistance protein At3g14460 (1424 aa).

The 303-residue stretch at 152–454 folds into the NB-ARC domain; that stretch reads WRQASRSRPD…AIDLLYQPRS (303 aa). Residue 200–207 participates in ATP binding; it reads GMPGVGKT. LRR repeat units follow at residues 498-523, 552-571, 572-595, 597-618, 620-641, 642-665, and 806-830; these read VSGD…HFSF, PTSL…LLNA, LSGL…LKGL, LLRY…VCTL, NLQT…SIAE, LINL…IKKL, and LPSL…FFFG. Disordered regions lie at residues 911–977 and 1050–1070; these read FRRS…PKDR and IKSS…QYDD. Composition is skewed to polar residues over residues 912 to 927 and 934 to 972; these read RRSL…SIPS and SSPT…SLSS. LRR repeat units lie at residues 1090 to 1114, 1118 to 1139, 1238 to 1262, 1264 to 1286, and 1310 to 1336; these read PQNL…LTES, LHEL…HPPT, TPKL…LFGL, SLLS…GFPS, and LENL…LLPK.

The protein belongs to the disease resistance NB-LRR family.

Its function is as follows. Potential disease resistance protein. This is Putative disease resistance protein At3g14460 from Arabidopsis thaliana (Mouse-ear cress).